Reading from the N-terminus, the 401-residue chain is tRNA (guanine-N(7)-)-methyltransferase non-catalytic subunit wuho (401 aa).

Residues 45-85 (KGRPRKYFDADSDSDEEQQNGDEPGTGKNNGGGDTGKKDQD) form a disordered region. Acidic residues predominate over residues 54–64 (ADSDSDEEQQN). 3 WD repeats span residues 86–125 (DQTNAIVALDVNEDRSLVAVATGDKSLYLFEVDQDGRTLK), 174–213 (GHMSQVLDVLIDTEEKLIITSDRDEKIRVTCHPDCHNIET), and 217–255 (GHTEFVSHLEFLGPELLLSLSGDKTLRWWNYTSGKELAR).

This sequence belongs to the WD repeat TRM82 family. As to quaternary structure, forms a heterodimer with the catalytic subunit.

It is found in the nucleus. It functions in the pathway tRNA modification; N(7)-methylguanine-tRNA biosynthesis. In terms of biological role, required for the formation of N(7)-methylguanine at position 46 (m7G46) in tRNA. In the complex, it is required to stabilize and induce conformational changes of the catalytic subunit. The chain is tRNA (guanine-N(7)-)-methyltransferase non-catalytic subunit wuho from Culex quinquefasciatus (Southern house mosquito).